A 387-amino-acid chain; its full sequence is 3-ketoacyl-CoA thiolase (387 aa).

The active-site Acyl-thioester intermediate is the cysteine 91. Active-site proton acceptor residues include histidine 343 and cysteine 373.

Belongs to the thiolase-like superfamily. Thiolase family. Heterotetramer of two alpha chains (FadB) and two beta chains (FadA).

It is found in the cytoplasm. The catalysed reaction is an acyl-CoA + acetyl-CoA = a 3-oxoacyl-CoA + CoA. Its pathway is lipid metabolism; fatty acid beta-oxidation. Catalyzes the final step of fatty acid oxidation in which acetyl-CoA is released and the CoA ester of a fatty acid two carbons shorter is formed. The sequence is that of 3-ketoacyl-CoA thiolase from Klebsiella pneumoniae subsp. pneumoniae (strain ATCC 700721 / MGH 78578).